A 1407-amino-acid chain; its full sequence is DNA-directed RNA polymerase subunit beta' (1407 aa).

Positions 70, 72, 85, and 88 each coordinate Zn(2+). Positions 460, 462, and 464 each coordinate Mg(2+). Positions 814, 888, 895, and 898 each coordinate Zn(2+).

Belongs to the RNA polymerase beta' chain family. In terms of assembly, the RNAP catalytic core consists of 2 alpha, 1 beta, 1 beta' and 1 omega subunit. When a sigma factor is associated with the core the holoenzyme is formed, which can initiate transcription. Requires Mg(2+) as cofactor. Zn(2+) is required as a cofactor.

It carries out the reaction RNA(n) + a ribonucleoside 5'-triphosphate = RNA(n+1) + diphosphate. Its function is as follows. DNA-dependent RNA polymerase catalyzes the transcription of DNA into RNA using the four ribonucleoside triphosphates as substrates. The sequence is that of DNA-directed RNA polymerase subunit beta' from Salmonella arizonae (strain ATCC BAA-731 / CDC346-86 / RSK2980).